Here is a 70-residue protein sequence, read N- to C-terminus: Alpha-conotoxin EIIB (70 aa).

The N-terminal stretch at 1 to 21 (MGMRMMFIVFLLVVLATTVVS) is a signal peptide. A propeptide spanning residues 22–51 (FTLDHVLGLASEGRNAKAIDNALDQRDPKR) is cleaved from the precursor. The residue at position 52 (Q52) is a Pyrrolidone carboxylic acid. P54 is modified (hydroxyproline). Disulfide bonds link C56/C62 and C57/C67. Residue C67 is modified to Cysteine amide.

In terms of tissue distribution, expressed by the venom duct.

It is found in the secreted. Functionally, alpha-conotoxins bind to the nicotinic acetylcholine receptors (nAChR) and inhibit them. This peptide potently blocks muscular nicotinic acetylcholine receptor (CHRNA1-CHRNB1-CHRNG-CHRND), and has no effect on neuronal receptors. It is able to totally displace [125I]-Bgtx from the Torpedo receptor with an inhibition constant (Ki) of 2.2 and 0.7 nM. This Conus ermineus (Agate cone) protein is Alpha-conotoxin EIIB.